Here is a 285-residue protein sequence, read N- to C-terminus: Malectin (285 aa).

Positions 1-26 (MRRVTLHCAARLVIAALWLLVEVCRA) are cleaved as a signal peptide. Residues 27 to 262 (ESGAQSLAER…TPNPYATDNS (236 aa)) are Lumenal-facing. The a carbohydrate site is built by Y71, Y93, Y120, F121, and D190. Positions 209 to 258 (KLQPHPGLEKREEEEEEEEEGEGPEGEKKSASTSPKNPVRSGPRTPNPYA) are disordered. The span at 220–232 (EEEEEEEEEGEGP) shows a compositional bias: acidic residues. The N-linked (GlcNAc...) asparagine glycan is linked to N261. A helical membrane pass occupies residues 263–283 (SLMFPILVAFGVFIPTLFCLC). The Cytoplasmic portion of the chain corresponds to 284–285 (RL).

It belongs to the malectin family.

The protein localises to the endoplasmic reticulum membrane. Carbohydrate-binding protein with a strong ligand preference for Glc2-N-glycan. May play a role in the early steps of protein N-glycosylation. In Danio rerio (Zebrafish), this protein is Malectin.